The sequence spans 157 residues: MRIGHGYDVHRFAEGDFITLGGVRIAHGFGLLAHSDGDVLLHALSDALLGAAALGDIGKHFPDTDPQFKGADSRVLLRHVLKQIHGKGWKVGNVDATIVAQAPKMAPHIDAMRALIAEDLQVELDQVNVKATTTEKLGFTGREEGIAVHAVALLLRA.

The a divalent metal cation site is built by D8 and H10. 4-CDP-2-C-methyl-D-erythritol 2-phosphate contacts are provided by residues 8–10 (DVH) and 34–35 (HS). H42 is an a divalent metal cation binding site. Residues 56–58 (DIG), 61–65 (FPDTD), 100–106 (AQAPKMA), 132–135 (TTTE), F139, and R142 contribute to the 4-CDP-2-C-methyl-D-erythritol 2-phosphate site.

This sequence belongs to the IspF family. In terms of assembly, homotrimer. It depends on a divalent metal cation as a cofactor.

The catalysed reaction is 4-CDP-2-C-methyl-D-erythritol 2-phosphate = 2-C-methyl-D-erythritol 2,4-cyclic diphosphate + CMP. It functions in the pathway isoprenoid biosynthesis; isopentenyl diphosphate biosynthesis via DXP pathway; isopentenyl diphosphate from 1-deoxy-D-xylulose 5-phosphate: step 4/6. Involved in the biosynthesis of isopentenyl diphosphate (IPP) and dimethylallyl diphosphate (DMAPP), two major building blocks of isoprenoid compounds. Catalyzes the conversion of 4-diphosphocytidyl-2-C-methyl-D-erythritol 2-phosphate (CDP-ME2P) to 2-C-methyl-D-erythritol 2,4-cyclodiphosphate (ME-CPP) with a corresponding release of cytidine 5-monophosphate (CMP). The sequence is that of 2-C-methyl-D-erythritol 2,4-cyclodiphosphate synthase from Pseudomonas savastanoi pv. phaseolicola (strain 1448A / Race 6) (Pseudomonas syringae pv. phaseolicola (strain 1448A / Race 6)).